The primary structure comprises 75 residues: MLVLARKVGESIFIGNDVEVKILKIDGGEVKIGISAPKSVRILRKELYEEIMAENKKAIEFDIKDISEVSKFENR.

This sequence belongs to the CsrA/RsmA family. In terms of assembly, homodimer; the beta-strands of each monomer intercalate to form a hydrophobic core, while the alpha-helices form wings that extend away from the core.

Its subcellular location is the cytoplasm. Its function is as follows. A translational regulator that binds mRNA to regulate translation initiation and/or mRNA stability. Usually binds in the 5'-UTR at or near the Shine-Dalgarno sequence preventing ribosome-binding, thus repressing translation. Its main target seems to be the major flagellin gene, while its function is anatagonized by FliW. The sequence is that of Translational regulator CsrA from Thermosipho melanesiensis (strain DSM 12029 / CIP 104789 / BI429).